Here is a 151-residue protein sequence, read N- to C-terminus: Putative pre-16S rRNA nuclease (151 aa).

This sequence belongs to the YqgF nuclease family.

The protein resides in the cytoplasm. Its function is as follows. Could be a nuclease involved in processing of the 5'-end of pre-16S rRNA. The polypeptide is Putative pre-16S rRNA nuclease (Aster yellows witches'-broom phytoplasma (strain AYWB)).